A 367-amino-acid chain; its full sequence is Carbamoyl-phosphate synthase (367 aa).

The ATP-grasp domain maps to 111 to 296; the sequence is KEFYNEIGVP…SLCELVNMAA (186 aa). ATP is bound at residue 137 to 186; the sequence is KMEFPVVLKQGQGQGGKDIKVAESLDDVKEYFEEFDHALCEKFIEGSEIS. Mg(2+)-binding residues include aspartate 253, glutamate 267, and asparagine 269. Mn(2+)-binding residues include aspartate 253, glutamate 267, and asparagine 269.

The protein belongs to the small carbamoyl-phosphate synthase family. Forms homodimers and homotetramers (dimers of dimers). The cofactor is Mg(2+). Mn(2+) is required as a cofactor.

The enzyme catalyses hydrogencarbonate + NH4(+) + 2 ATP = carbamoyl phosphate + 2 ADP + phosphate + 2 H(+). Its function is as follows. Catalyzes the synthesis of carbamoyl phosphate from ATP, ammonium and bicarbonate. Proceeds via a three-step mechanism, i.e. the phosphorylation of hydrogencarbonate to carboxyphosphate, a nucleophilic attack of ammonia on carboxyphosphate yielding carbamate, and the phosphorylation of carbamate forming carbamoyl phosphate. In M.smithii, the predominant archaeon in the human gut, one function of this enzyme may be to sequester ammonia, a scarce nutrient in the intestine which is the major source of nitrogen in M.smithii for the biosynthesis of nucleotides, amino acids, and many other metabolites. The protein is Carbamoyl-phosphate synthase of Methanobrevibacter smithii (strain ATCC 35061 / DSM 861 / OCM 144 / PS).